Reading from the N-terminus, the 149-residue chain is Deoxyuridine 5'-triphosphate nucleotidohydrolase (149 aa).

Substrate-binding positions include 68 to 70, Asn-81, 85 to 87, and Met-95; these read RSG and LID.

This sequence belongs to the dUTPase family. It depends on Mg(2+) as a cofactor.

It catalyses the reaction dUTP + H2O = dUMP + diphosphate + H(+). It functions in the pathway pyrimidine metabolism; dUMP biosynthesis; dUMP from dCTP (dUTP route): step 2/2. This enzyme is involved in nucleotide metabolism: it produces dUMP, the immediate precursor of thymidine nucleotides and it decreases the intracellular concentration of dUTP so that uracil cannot be incorporated into DNA. The chain is Deoxyuridine 5'-triphosphate nucleotidohydrolase from Polynucleobacter asymbioticus (strain DSM 18221 / CIP 109841 / QLW-P1DMWA-1) (Polynucleobacter necessarius subsp. asymbioticus).